The following is a 380-amino-acid chain: Acyl-coenzyme A diphosphatase NUDT19 (380 aa).

Residues 8-264 (WKEAATLIVA…KIWIPPPQFY (257 aa)) form the Nudix hydrolase domain. A Nudix box motif is present at residues 115-136 (SLIPGEVATRICAIRETFEESG). Mg(2+) contacts are provided by Glu-130 and Glu-134. The Microbody targeting signal signature appears at 378 to 380 (NKL).

This sequence belongs to the Nudix hydrolase family. In terms of assembly, monomer. Requires Mg(2+) as cofactor. The cofactor is Mn(2+).

Its subcellular location is the peroxisome. It carries out the reaction an acyl-CoA + H2O = an acyl-4'-phosphopantetheine + adenosine 3',5'-bisphosphate + 2 H(+). The catalysed reaction is CoA + H2O = (R)-4'-phosphopantetheine + adenosine 3',5'-bisphosphate + 2 H(+). It catalyses the reaction hexanoyl-CoA + H2O = hexanoyl-4'-phosphopantetheine + adenosine 3',5'-bisphosphate + 2 H(+). The enzyme catalyses octanoyl-CoA + H2O = S-octanoyl-4'-phosphopantetheine + adenosine 3',5'-bisphosphate + 2 H(+). It carries out the reaction butanoyl-CoA + H2O = S-butanoyl-4'-phosphopantetheine + adenosine 3',5'-bisphosphate + 2 H(+). The catalysed reaction is propanoyl-CoA + H2O = propanoyl-4'-phosphopantetheine + adenosine 3',5'-bisphosphate + 2 H(+). It catalyses the reaction malonyl-CoA + H2O = malonyl-4'-phosphopantetheine + adenosine 3',5'-bisphosphate + 2 H(+). The enzyme catalyses succinyl-CoA + H2O = succinyl-4'-phosphopantetheine + adenosine 3',5'-bisphosphate + 2 H(+). It carries out the reaction choloyl-CoA + H2O = S-choloyl-4'-phosphopantetheine + adenosine 3',5'-bisphosphate + 2 H(+). The catalysed reaction is 4,8-dimethylnonanoyl-CoA + H2O = S-(4,8-dimethylnonanoyl)-4'-phosphopantetheine + adenosine 3',5'-bisphosphate + 2 H(+). It catalyses the reaction (9Z,12Z,15Z)-octadecatrienoyl-CoA + H2O = S-(9Z,12Z,15Z-octadecatrienoyl)-4'-phosphopantetheine + adenosine 3',5'-bisphosphate + 2 H(+). The enzyme catalyses (9Z,12Z)-octadecadienoyl-CoA + H2O = S-(9Z,12Z-octadecadienoyl)-4'-phosphopantetheine + adenosine 3',5'-bisphosphate + 2 H(+). It carries out the reaction (9Z)-hexadecenoyl-CoA + H2O = S-(9Z-hexadecenoyl)-4'-phosphopantetheine + adenosine 3',5'-bisphosphate + 2 H(+). The catalysed reaction is (9Z)-tetradecenoyl-CoA + H2O = S-(9Z-tetradecenoyl)-4'-phosphopantetheine + adenosine 3',5'-bisphosphate + 2 H(+). It catalyses the reaction (6Z)-octenoyl-CoA + H2O = S-(6Z-octenoyl)-4'-phosphopantetheine + adenosine 3',5'-bisphosphate + 2 H(+). The enzyme catalyses hexadecanoyl-CoA + H2O = S-hexadecanoyl-4'-phosphopantetheine + adenosine 3',5'-bisphosphate + 2 H(+). It carries out the reaction tetradecanoyl-CoA + H2O = tetradecanoyl-4'-phosphopantetheine + adenosine 3',5'-bisphosphate + 2 H(+). The catalysed reaction is dodecanoyl-CoA + H2O = S-dodecanoyl-4'-phosphopantetheine + adenosine 3',5'-bisphosphate + 2 H(+). It catalyses the reaction a 5'-end CoA-ribonucleoside in mRNA + H2O = a 5'-end phospho-adenosine-phospho-ribonucleoside in mRNA + (R)-4'-phosphopantetheine + 2 H(+). Fatty acyl-coenzyme A (CoA) diphosphatase that hydrolyzes fatty acyl-CoA to yield acyl-4'-phosphopantetheine and adenosine 3',5'-bisphosphate. Mediates the hydrolysis of a wide range of CoA esters, including choloyl-CoA and branched-chain fatty-acyl-CoA esters and at low substrate concentrations medium and long-chain fatty-acyl-CoA esters are the primary substrates. Highest activity seen with medium-chain acyl-CoA esters and higher rates of activity seen with the unsaturated acyl-CoA esters compared with the saturated esters. Exhibits decapping activity towards dpCoA-capped RNAs in vitro. This chain is Acyl-coenzyme A diphosphatase NUDT19 (nudt19), found in Xenopus laevis (African clawed frog).